The chain runs to 500 residues: Probable cytosol aminopeptidase (500 aa).

Mn(2+) is bound by residues K262 and D267. K274 is a catalytic residue. Mn(2+) is bound by residues D285, D344, and E346. Residue R348 is part of the active site.

Belongs to the peptidase M17 family. Requires Mn(2+) as cofactor.

Its subcellular location is the cytoplasm. It carries out the reaction Release of an N-terminal amino acid, Xaa-|-Yaa-, in which Xaa is preferably Leu, but may be other amino acids including Pro although not Arg or Lys, and Yaa may be Pro. Amino acid amides and methyl esters are also readily hydrolyzed, but rates on arylamides are exceedingly low.. The catalysed reaction is Release of an N-terminal amino acid, preferentially leucine, but not glutamic or aspartic acids.. In terms of biological role, presumably involved in the processing and regular turnover of intracellular proteins. Catalyzes the removal of unsubstituted N-terminal amino acids from various peptides. This chain is Probable cytosol aminopeptidase, found in Ehrlichia ruminantium (strain Gardel).